Reading from the N-terminus, the 87-residue chain is A-agglutinin-binding subunit (87 aa).

Residues 1–18 (MQLLRCFSIFSVIASVLA) form the signal peptide. Thr-22 carries O-linked (Man...) threonine glycosylation. O-linked (Man...) serine glycosylation occurs at Ser-30. An O-linked (Man...) threonine glycan is attached at Thr-32. Residue Ser-39 is glycosylated (O-linked (Man...) serine). Thr-63 carries an O-linked (Man...) threonine glycan. O-linked (Man...) serine glycosylation is present at Ser-66. O-linked (Man...) threonine glycosylation occurs at Thr-75.

Heterodimer; disulfide-linked. Interacts with SAG1.

Its function is as follows. Receptor binding subunit of the a-agglutinin heterodimer. S.cerevisiae a and alpha cells express the complementary cell surface glycoproteins a-agglutinin and alpha-agglutinin, respectively, which interact with one another to promote cellular aggregation during mating. This is A-agglutinin-binding subunit (AGA2) from Saccharomyces cerevisiae (strain ATCC 204508 / S288c) (Baker's yeast).